Reading from the N-terminus, the 277-residue chain is 2-dehydro-3-deoxyphosphooctonate aldolase (277 aa).

The protein belongs to the KdsA family.

Its subcellular location is the cytoplasm. It catalyses the reaction D-arabinose 5-phosphate + phosphoenolpyruvate + H2O = 3-deoxy-alpha-D-manno-2-octulosonate-8-phosphate + phosphate. The protein operates within carbohydrate biosynthesis; 3-deoxy-D-manno-octulosonate biosynthesis; 3-deoxy-D-manno-octulosonate from D-ribulose 5-phosphate: step 2/3. It functions in the pathway bacterial outer membrane biogenesis; lipopolysaccharide biosynthesis. This is 2-dehydro-3-deoxyphosphooctonate aldolase from Brucella abortus (strain S19).